A 79-amino-acid chain; its full sequence is Conotoxin TxMEKL-021 (79 aa).

Positions 1-19 are cleaved as a signal peptide; that stretch reads MEKLTILLLVAVVLMSTQA. Residues 20–47 constitute a propeptide that is removed on maturation; it reads LPQGGGEKRPRENIRFLSKRKSNAERWR. 3 disulfides stabilise this stretch: Cys51–Cys65, Cys58–Cys69, and Cys64–Cys75.

It belongs to the conotoxin O2 superfamily. Expressed by the venom duct.

Its subcellular location is the secreted. This chain is Conotoxin TxMEKL-021, found in Conus textile (Cloth-of-gold cone).